A 202-amino-acid polypeptide reads, in one-letter code: MRPLMAGKRRKDILPLEEALRAQSAFARTLRTWEGARRAAVRSATVRARRRGALPSSQAAAAPRVSLMEVALARYGLFDKDAAGACAEYARQRRTFSIHSRRGRRKLRTAVPEARLDLHGMTCSEARSALDSFFAQARERLLQKVEIVHGKGHHSKGGSVLAPSVKRYVQAHPHAGELFHPAERRGGKGTTWVLLKRSVPLH.

The region spanning 116 to 196 is the Smr domain; the sequence is LDLHGMTCSE…GKGTTWVLLK (81 aa).

This is an uncharacterized protein from Treponema pallidum (strain Nichols).